The sequence spans 188 residues: UPF0301 protein azo3459 (188 aa).

Belongs to the UPF0301 (AlgH) family.

This is UPF0301 protein azo3459 from Azoarcus sp. (strain BH72).